The following is a 257-amino-acid chain: Diaminopimelate epimerase (257 aa).

Residues N6 and N57 each contribute to the substrate site. The active-site Proton donor is the C66. Substrate contacts are provided by residues 67 to 68 (GN), N170, and 188 to 189 (ER). The active-site Proton acceptor is the C198. 199-200 (GT) lines the substrate pocket.

This sequence belongs to the diaminopimelate epimerase family. Homodimer.

The protein localises to the cytoplasm. It carries out the reaction (2S,6S)-2,6-diaminopimelate = meso-2,6-diaminopimelate. It participates in amino-acid biosynthesis; L-lysine biosynthesis via DAP pathway; DL-2,6-diaminopimelate from LL-2,6-diaminopimelate: step 1/1. Catalyzes the stereoinversion of LL-2,6-diaminopimelate (L,L-DAP) to meso-diaminopimelate (meso-DAP), a precursor of L-lysine and an essential component of the bacterial peptidoglycan. The polypeptide is Diaminopimelate epimerase (Chlorobaculum tepidum (strain ATCC 49652 / DSM 12025 / NBRC 103806 / TLS) (Chlorobium tepidum)).